Reading from the N-terminus, the 327-residue chain is FERM domain-containing protein 6 (327 aa).

Residues 16–320 enclose the FERM domain; sequence RRVCIFLPND…NSHRLYMNLQ (305 aa).

Its subcellular location is the cytoplasm. The protein localises to the cell membrane. The polypeptide is FERM domain-containing protein 6 (Frmd6) (Rattus norvegicus (Rat)).